A 432-amino-acid polypeptide reads, in one-letter code: Adenylosuccinate synthetase (432 aa).

GTP-binding positions include 12-18 (GDEGKGK) and 40-42 (GHT). Asp-13 acts as the Proton acceptor in catalysis. Residues Asp-13 and Gly-40 each coordinate Mg(2+). IMP-binding positions include 13-16 (DEGK), 38-41 (NAGH), Thr-129, Arg-143, Gln-224, Thr-239, and Arg-303. Catalysis depends on His-41, which acts as the Proton donor. Residue 299–305 (VTTGRRR) coordinates substrate. GTP-binding positions include Arg-305, 331 to 333 (KLD), and 413 to 415 (GVG).

This sequence belongs to the adenylosuccinate synthetase family. In terms of assembly, homodimer. Requires Mg(2+) as cofactor.

Its subcellular location is the cytoplasm. The enzyme catalyses IMP + L-aspartate + GTP = N(6)-(1,2-dicarboxyethyl)-AMP + GDP + phosphate + 2 H(+). It participates in purine metabolism; AMP biosynthesis via de novo pathway; AMP from IMP: step 1/2. Its function is as follows. Plays an important role in the de novo pathway of purine nucleotide biosynthesis. Catalyzes the first committed step in the biosynthesis of AMP from IMP. This chain is Adenylosuccinate synthetase, found in Mycobacterium tuberculosis (strain CDC 1551 / Oshkosh).